Here is a 104-residue protein sequence, read N- to C-terminus: Toxin-like protein 14 (104 aa).

The signal sequence occupies residues 1–25 (MNTYNARLYIFSLALALVILKGTKC).

Post-translationally, contains 4 disulfide bonds. Expressed by the venom gland.

The protein localises to the secreted. This Urodacus yaschenkoi (Inland robust scorpion) protein is Toxin-like protein 14.